Here is a 559-residue protein sequence, read N- to C-terminus: Thrombospondin-related anonymous protein (559 aa).

A signal peptide spans 1-25 (MNHLGNVKYLVIVFLIFFDLFLVNG). At 26–496 (RDVQNNIVDE…KKGESDNKYK (471 aa)) the chain is on the extracellular side. The 187-residue stretch at 48-234 (DLYLLMDCSG…NVIGPFMKAV (187 aa)) folds into the VWFA domain. Residues Q77 and Q78 each participate in an isoglutamyl lysine isopeptide (Gln-Lys) (interchain with K-? in Factor 3(A)) cross-link. An N-linked (GlcNAc...) asparagine glycan is attached at N132. The TSP type-1 domain maps to 241–287 (TASCGVWDEWSPCSVTCGKGTRSRKREILHEGCTSEIQEQCEEERCP). 3 disulfide bridges follow: C244/C273, C253/C281, and C257/C286. Positions 280–496 (QCEEERCPPK…KKGESDNKYK (217 aa)) are disordered. Residues 283 to 292 (EERCPPKWEP) are compositionally biased toward basic and acidic residues. Residues 307-309 (RGD) carry the Cell attachment site motif. N310 is a glycosylation site (N-linked (GlcNAc...) asparagine). The segment covering 370–400 (KEVPSDVPKNPEDDREENFDIPKKPENKHDN) has biased composition (basic and acidic residues). The span at 431–440 (DPQSQDNNGN) shows a compositional bias: polar residues. Positions 444-459 (PNSEDRETRPHGRNNE) are enriched in basic and acidic residues. N-linked (GlcNAc...) asparagine glycosylation is present at N460. Basic and acidic residues predominate over residues 466–495 (KYNDTPKHPEREEHEKPDNNKKKGESDNKY). Residues 497–515 (IAGGIAGGLALLACAGLAY) traverse the membrane as a helical segment. The Cytoplasmic segment spans residues 516-559 (KFVVPGAATPYAGEPAPFDETLGEEDKDLDEPEQFRLPEENEWN). The segment at 523–559 (ATPYAGEPAPFDETLGEEDKDLDEPEQFRLPEENEWN) is disordered. Residues 536 to 547 (TLGEEDKDLDEP) are compositionally biased toward acidic residues. Positions 548-559 (EQFRLPEENEWN) are enriched in basic and acidic residues.

The protein localises to the cell membrane. The chain is Thrombospondin-related anonymous protein (TRAP) from Plasmodium falciparum.